Consider the following 143-residue polypeptide: Transcription antitermination protein NusB (143 aa).

Belongs to the NusB family.

In terms of biological role, involved in transcription antitermination. Required for transcription of ribosomal RNA (rRNA) genes. Binds specifically to the boxA antiterminator sequence of the ribosomal RNA (rrn) operons. The chain is Transcription antitermination protein NusB from Methylacidiphilum infernorum (isolate V4) (Methylokorus infernorum (strain V4)).